Reading from the N-terminus, the 521-residue chain is Probable methylmalonate-semialdehyde/malonate-semialdehyde dehydrogenase [acylating], mitochondrial (521 aa).

Residues F172, K196, E199, R200, and S249 each contribute to the NAD(+) site. C304 (nucleophile) is an active-site residue. Residue E404 participates in NAD(+) binding.

Belongs to the aldehyde dehydrogenase family. As to quaternary structure, homotetramer.

Its subcellular location is the mitochondrion. It carries out the reaction 2-methyl-3-oxopropanoate + NAD(+) + CoA + H2O = propanoyl-CoA + hydrogencarbonate + NADH + H(+). It catalyses the reaction 3-oxopropanoate + NAD(+) + CoA + H2O = hydrogencarbonate + acetyl-CoA + NADH + H(+). Functionally, probable malonate and methylmalonate semialdehyde dehydrogenase involved in the catabolism of valine, thymine, and compounds catabolized by way of beta-alanine, including uracil and cytidine. This Aedes aegypti (Yellowfever mosquito) protein is Probable methylmalonate-semialdehyde/malonate-semialdehyde dehydrogenase [acylating], mitochondrial.